We begin with the raw amino-acid sequence, 369 residues long: Aminomethyltransferase (369 aa).

The protein belongs to the GcvT family. The glycine cleavage system is composed of four proteins: P, T, L and H.

The enzyme catalyses N(6)-[(R)-S(8)-aminomethyldihydrolipoyl]-L-lysyl-[protein] + (6S)-5,6,7,8-tetrahydrofolate = N(6)-[(R)-dihydrolipoyl]-L-lysyl-[protein] + (6R)-5,10-methylene-5,6,7,8-tetrahydrofolate + NH4(+). Functionally, the glycine cleavage system catalyzes the degradation of glycine. This Xanthomonas oryzae pv. oryzae (strain MAFF 311018) protein is Aminomethyltransferase.